Here is a 360-residue protein sequence, read N- to C-terminus: 3-dehydroquinate synthase (360 aa).

Residues 69 to 74 (DGEKYK), 103 to 107 (GVVGD), 127 to 128 (TT), Lys-140, Lys-149, and 167 to 170 (TLDT) each bind NAD(+). The Zn(2+) site is built by Glu-182, His-246, and His-263.

It belongs to the sugar phosphate cyclases superfamily. Dehydroquinate synthase family. Co(2+) serves as cofactor. The cofactor is Zn(2+). It depends on NAD(+) as a cofactor.

The protein resides in the cytoplasm. It catalyses the reaction 7-phospho-2-dehydro-3-deoxy-D-arabino-heptonate = 3-dehydroquinate + phosphate. Its pathway is metabolic intermediate biosynthesis; chorismate biosynthesis; chorismate from D-erythrose 4-phosphate and phosphoenolpyruvate: step 2/7. Its function is as follows. Catalyzes the conversion of 3-deoxy-D-arabino-heptulosonate 7-phosphate (DAHP) to dehydroquinate (DHQ). In Vesicomyosocius okutanii subsp. Calyptogena okutanii (strain HA), this protein is 3-dehydroquinate synthase.